A 275-amino-acid chain; its full sequence is Transcriptional coregulator psa-3 (275 aa).

Positions 91 to 161 (TDDIKRLFQS…RRTVCHEALV (71 aa)) constitute an MEIS N-terminal domain. The segment at 239–275 (QLPPNFLKPSNEKSPEKSEEEKSQKPSSSPKSPSLSD) is disordered. The segment covering 248–262 (SNEKSPEKSEEEKSQ) has biased composition (basic and acidic residues). The span at 263-275 (KPSSSPKSPSLSD) shows a compositional bias: low complexity.

Interacts with homeobox protein ceh-20; the interaction is direct, facilitates nuclear localization of ceh-20 and may stabilize interaction of a ceh-20-nob-1 complex with DNA.

It localises to the nucleus. Functionally, probable transcription coregulator. Required for asymmetric cell divisions of the T hypodermal cells, and cell fate determination, in concert with homeobox proteins nob-1 and ceh-20. Acts downstream of the Wnt signaling pathway, and of ceh-20 and nob-1. The protein is Transcriptional coregulator psa-3 of Caenorhabditis elegans.